Consider the following 4043-residue polypeptide: Polyketide synthase-nonribosomal peptide synthetase (4043 aa).

The Ketosynthase family 3 (KS3) domain occupies Ser-8–Ser-446. Catalysis depends on for beta-ketoacyl synthase activity residues Cys-181, His-320, and His-366. The segment at Val-557–Phe-877 is acyl transferase. Residues Asn-944–Ser-1078 form an N-terminal hotdog fold region. Residues Asn-944–Ala-1246 enclose the PKS/mFAS DH domain. The dehydratase (DH) domain stretch occupies residues Glu-945 to Pro-1243. His-976 acts as the Proton acceptor; for dehydratase activity in catalysis. The segment at Leu-1093–Ala-1246 is C-terminal hotdog fold. The active-site Proton donor; for dehydratase activity is the Asp-1154. The methyltransferase (MT) domain stretch occupies residues Arg-1400–Asp-1585. The interval Thr-2115–Ile-2288 is ketoreductase (KR)domain. One can recognise a Carrier 1 domain in the interval Ser-2394 to Leu-2475. The segment at Ser-2395–Gln-2472 is peptidyl carrier protein. Ser-2435 is modified (O-(pantetheine 4'-phosphoryl)serine). 2 disordered regions span residues Pro-2476–Arg-2575 and Glu-2587–Ile-2630. Polar residues-rich tracts occupy residues Pro-2494 to Asn-2512 and Ala-2520 to Lys-2534. Positions Pro-2537–Val-2550 are enriched in basic and acidic residues. A compositionally biased stretch (low complexity) spans Thr-2617–Ser-2627. Residues Lys-2640–Pro-3069 form a condensation region. An adenylation region spans residues Glu-3102–Ile-3502. In terms of domain architecture, Carrier 2 spans Thr-3617 to Glu-3697. The thiolation stretch occupies residues Ser-3622 to Asp-3694. O-(pantetheine 4'-phosphoryl)serine is present on Ser-3657. Residues Leu-3735–Met-3954 are reductase-like.

In the C-terminal section; belongs to the NRP synthetase family.

It functions in the pathway mycotoxin biosynthesis. Functionally, hybrid PKS-NRPS synthetase; part of the gene cluster that mediates the biosynthesis of the mycotoxins cytochalasins E and K. The hybrid PKS-NRPS synthetase ccsA and the enoyl reductase ccsC are responsible for fusion of phenylalanine with an octaketide backbone and subsequent release of the stable tetramic acid precursor. The polyketide synthase module (PKS) of the PKS-NRPS ccsA is responsible for the synthesis of the octaketide backbone. The downstream nonribosomal peptide synthetase (NRPS) amidates the carboxyl end of the octaketide with a phenylalanine. A reductase-like domain (R) at the C-terminus catalyzes the reductive release of the polyketide-amino acid intermediate. Because ccsA lacks a designated enoylreductase (ER) domain, the required activity is provided the enoyl reductase ccsC. Upon formation of the 11-membered carbocycle-fused perhydroisoindolone intermediate, a number of oxidative steps are required to afford the final cytochalasin E and K, including two hydroxylations at C17 and C18, one alcohol oxidation at C17, one epoxidation at C6 and C7 and two Baeyer-Villiger oxidations. The oxidative modification at C17, C18 and the C6-C7 epoxidation are likely to be catalyzed by the two cytochrome P450 oxygenases ccsD and ccsG. CcsD may be responsible for the epoxidation of the C6-C7 double bond. CcsG may be responsible for the successive oxidative modifications at C17 and C18. The double Baeyer-Villiger oxidations of ketocytochalasin to precytochalasin and cytochalasin Z(16) are among the final steps leading to cytochalasin E and K and are catalyzed by ccsB. The first oxygen insertion step follows that of the classic BVMO mechanism, generating the ester precytochalasin. Release of precytochalasin into an aqueous environment can generate the shunt product iso-precytochalasin through spontaneous isomerization. Alternatively, precytochalasin can undergo further oxidation by ccsB to yield the in-line carbonate-containing cytochalasin Z(16). Cytochalasin Z(16) is a precursor to cytochalasin E and cytochalasin K, whereas iso-precytochalasin is a precursor to cytochalasin Z(17) and rosellichalasin. The hydrolyase ccsE may catalyze hydrolysis of epoxide bond in cytochalasin E to afford cytochalasin K. The function of ccsF has not been assigned but it may play a role in post-PKS-NRPS biosynthetic step, resistance or transport of cytochalasins and related PKS-NRPS products. This is Polyketide synthase-nonribosomal peptide synthetase from Aspergillus clavatus (strain ATCC 1007 / CBS 513.65 / DSM 816 / NCTC 3887 / NRRL 1 / QM 1276 / 107).